A 261-amino-acid chain; its full sequence is Mlc titration factor A (261 aa).

Residues His111, His148, His152, and Glu211 each coordinate Zn(2+).

It belongs to the MtfA family. As to quaternary structure, interacts with Mlc. Zn(2+) is required as a cofactor.

It is found in the cytoplasm. Involved in the modulation of the activity of the glucose-phosphotransferase system (glucose-PTS). Interacts with the transcriptional repressor Mlc, preventing its interaction with DNA and leading to the modulation of expression of genes regulated by Mlc, including ptsG, which encodes the PTS system glucose-specific EIICB component. Its function is as follows. Shows zinc-dependent metallopeptidase activity. In Edwardsiella ictaluri (strain 93-146), this protein is Mlc titration factor A.